A 341-amino-acid polypeptide reads, in one-letter code: S-adenosylmethionine:tRNA ribosyltransferase-isomerase (341 aa).

The protein belongs to the QueA family. Monomer.

The protein resides in the cytoplasm. It catalyses the reaction 7-aminomethyl-7-carbaguanosine(34) in tRNA + S-adenosyl-L-methionine = epoxyqueuosine(34) in tRNA + adenine + L-methionine + 2 H(+). It functions in the pathway tRNA modification; tRNA-queuosine biosynthesis. In terms of biological role, transfers and isomerizes the ribose moiety from AdoMet to the 7-aminomethyl group of 7-deazaguanine (preQ1-tRNA) to give epoxyqueuosine (oQ-tRNA). In Clostridium beijerinckii (strain ATCC 51743 / NCIMB 8052) (Clostridium acetobutylicum), this protein is S-adenosylmethionine:tRNA ribosyltransferase-isomerase.